Consider the following 231-residue polypeptide: Large ribosomal subunit protein uL5m (231 aa).

This sequence belongs to the universal ribosomal protein uL5 family.

The protein localises to the mitochondrion. In Prototheca wickerhamii, this protein is Large ribosomal subunit protein uL5m (RPL5).